The sequence spans 185 residues: Transposon Tn3 resolvase (185 aa).

Residues 2–137 (RIFGYARVST…EGRQEAKLKG (136 aa)) form the Resolvase/invertase-type recombinase catalytic domain. Catalysis depends on serine 10, which acts as the O-(5'-phospho-DNA)-serine intermediate. A DNA-binding region (H-T-H motif) is located at residues 161–180 (ATEIAHQLSIARSTVYKILE).

This sequence belongs to the site-specific recombinase resolvase family.

Its function is as follows. Resolvase catalyzes the resolution (a site-specific recombination) of the cointegrated replicon to yield the final transposition products. The chain is Transposon Tn3 resolvase (tnpR) from Escherichia coli.